Here is a 2109-residue protein sequence, read N- to C-terminus: Nonribosomal peptide synthetase sidE (2109 aa).

Positions 31-512 (LTPPSPPCLV…QNGKVDFRAI (482 aa)) are adenylation 1. The Carrier 1 domain occupies 537–613 (AGLSETASKI…EIADTVQLDS (77 aa)). O-(pantetheine 4'-phosphoryl)serine is present on serine 574. A condensation 1 region spans residues 646-908 (DAYPVTALQE…LAVVPYAIAI (263 aa)). An adenylation 2 region spans residues 1058-1555 (RTLNGQFEAT…GKANRKQLKA (498 aa)). Residues 1584–1660 (PLASETQKVL…AMADQLKGES (77 aa)) form the Carrier 2 domain. Position 1621 is an O-(pantetheine 4'-phosphoryl)serine (serine 1621). The tract at residues 1695 to 1968 (YPCPPGQAEF…NFLPMRSKVD (274 aa)) is condensation 2.

The protein belongs to the NRP synthetase family.

Its pathway is siderophore biosynthesis. Its function is as follows. Nonribosomal peptide synthetase; part of the siderophore biosynthetic pathway. Aspergillus fumigatus produces four types of siderophores, low-molecular-mass iron chelators, including excreted fusarinine C (FsC) and triacetylfusarinine C (TAFC) for iron uptake and intacellular ferricrocin (FC) for hyphal and hydroxyferricrocin (HFC) for conidial iron distribution and storage. TAFC consists of three N(2)-acetyl-N(5)-anhydromevalonyl-N(5)-hydroxyornithine residues cyclically linked by ester bonds; FC is a cyclic hexapeptide with the structure Gly-Ser-Gly-(N(5)-acetyl-N(5)-hydroxyornithine)x3. The biosynthesis of all four siderophores depends on the hydroxylation of ornithine, catalyzed by the monooxygenase sidA. Subsequently, the pathways for biosynthesis of extra- and intracellular siderophores split. For biosynthesis of extracellular siderophores, the transacylase sidF transfers anhydromevalonyl to N(5)-hydroxyornithine. The required anhydromevalonyl-CoA moiety is derived from mevalonate by CoA ligation and dehydration catalyzed by sidI and sidH respectively. The acetylation of N(5)-hydroxyornithine for FC biosynthesis involves the constitutively expressed sidL. FC is hydroxylated to HFC by an as yet uncharacterized enzyme during conidiation. Assembly of fusarinine C (FsC) and FC is catalyzed by two different nonribosomal peptide synthetases (NRPS), sidD and sidC respectively. Subsequently, sidG catalyzes N2-acetylation of FsC for forming TAFC. Both extra- and intracellular siderophores are crucial for growth during iron limitation and virulence. The polypeptide is Nonribosomal peptide synthetase sidE (Aspergillus fumigatus (strain ATCC MYA-4609 / CBS 101355 / FGSC A1100 / Af293) (Neosartorya fumigata)).